We begin with the raw amino-acid sequence, 210 residues long: V-type ATP synthase subunit D (210 aa).

It belongs to the V-ATPase D subunit family.

In terms of biological role, produces ATP from ADP in the presence of a proton gradient across the membrane. The polypeptide is V-type ATP synthase subunit D (Coprothermobacter proteolyticus (strain ATCC 35245 / DSM 5265 / OCM 4 / BT)).